Reading from the N-terminus, the 235-residue chain is RING-H2 finger protein ATL17 (235 aa).

The helical transmembrane segment at 1–21 threads the bilayer; it reads MLTTTILILLIVILMVSLHLY. Residues 76 to 118 form an RING-type; atypical zinc finger; sequence CSVCLSEFKDNESGRVMPNCKHTFHVHCIDMWFHSHSSCPLCR. A disordered region spans residues 143–167; that stretch reads VYGDTNHHEGTETTGDSVPEDSQRK.

This sequence belongs to the RING-type zinc finger family. ATL subfamily.

The protein resides in the membrane. The enzyme catalyses S-ubiquitinyl-[E2 ubiquitin-conjugating enzyme]-L-cysteine + [acceptor protein]-L-lysine = [E2 ubiquitin-conjugating enzyme]-L-cysteine + N(6)-ubiquitinyl-[acceptor protein]-L-lysine.. Its pathway is protein modification; protein ubiquitination. May be involved in the early steps of the plant defense signaling pathway. This chain is RING-H2 finger protein ATL17 (ATL17), found in Arabidopsis thaliana (Mouse-ear cress).